The sequence spans 521 residues: GMP synthase [glutamine-hydrolyzing] (521 aa).

Positions 9–203 constitute a Glutamine amidotransferase type-1 domain; it reads KILILDFGSQ…VSDICQCKKN (195 aa). The active-site Nucleophile is Cys86. Residues His177 and Glu179 contribute to the active site. The GMPS ATP-PPase domain maps to 204–396; sequence WTTDNIITKL…LGLPTHMLNC (193 aa). An ATP-binding site is contributed by 231–237; that stretch reads SGGVDSS.

As to quaternary structure, homodimer.

The enzyme catalyses XMP + L-glutamine + ATP + H2O = GMP + L-glutamate + AMP + diphosphate + 2 H(+). It functions in the pathway purine metabolism; GMP biosynthesis; GMP from XMP (L-Gln route): step 1/1. Catalyzes the synthesis of GMP from XMP. The protein is GMP synthase [glutamine-hydrolyzing] of Vesicomyosocius okutanii subsp. Calyptogena okutanii (strain HA).